The sequence spans 224 residues: SPI-2 type 3 secretion system stator protein (224 aa).

This sequence belongs to the SctL stator family. As to quaternary structure, the core secretion machinery of the T3SS is composed of approximately 20 different proteins, including cytoplasmic components, a base, an export apparatus and a needle. This subunit is part of the cytosolic complex. Interacts directly with SsaN/SctN2 (T3SS-2 ATPase).

Its subcellular location is the cytoplasm. Component of the type III secretion system (T3SS), also called injectisome, which is used to inject bacterial effector proteins into eukaryotic host cells. Acts as a regulator of the SsaN/SctN2 ATPase activity. The chain is SPI-2 type 3 secretion system stator protein from Salmonella typhimurium (strain LT2 / SGSC1412 / ATCC 700720).